Consider the following 66-residue polypeptide: uncharacterized protein (66 aa).

Residues 1–20 (MIALAYLATVAIAAMVLAVA) are hydrophobic.

This is an uncharacterized protein from Streptomyces lividans.